Here is a 300-residue protein sequence, read N- to C-terminus: Type 1 fimbrin D-mannose specific adhesin (300 aa).

Positions 1-21 (MKRVITLFAVLLMGWSVNAWS) are cleaved as a signal peptide.

The protein belongs to the fimbrial protein family.

The protein resides in the fimbrium. In terms of biological role, involved in regulation of length and mediation of adhesion of type 1 fimbriae (but not necessary for the production of fimbriae). Adhesin responsible for the binding to D-mannose. It is laterally positioned at intervals in the structure of the type 1 fimbriae. In order to integrate FimH in the fimbriae FimF and FimG are needed. The sequence is that of Type 1 fimbrin D-mannose specific adhesin (fimH) from Escherichia coli (strain K12).